The primary structure comprises 183 residues: Intraflagellar transport protein 27 homolog (183 aa).

Residues 12 to 19 (GAPTVGKT), 63 to 67 (DVSGQ), and 120 to 123 (NKSD) contribute to the GTP site.

The protein belongs to the small GTPase superfamily. Rab family. Component of the IFT complex B.

It localises to the cell projection. Its subcellular location is the cilium. The protein localises to the flagellum. Small GTPase-like component of the intraflagellar transport (IFT) complex B required for both anterograde and retrograde intraflagellar transport. May be involved in cargo loading of the retrograde transport. In Trypanosoma brucei brucei (strain 927/4 GUTat10.1), this protein is Intraflagellar transport protein 27 homolog.